We begin with the raw amino-acid sequence, 542 residues long: Retron Ec83 probable ATPase (542 aa).

The short motif at 92–99 (GNNGCGKS) is the ATP-binding element.

In terms of biological role, probable ATPase component of antiviral defense system retron Ec83, composed of a non-coding RNA (ncRNA), a reverse transcriptase (RT), this protein and a putative HNH endonuclease. Expression of retron Ec83 confers protection against bacteriophage T2, T4 and T6. At multiplicity of infection (MOI) of 0.02 cultures slow growth when infected with T4 but do not collapse, at MOI 2 cultures enter growth stasis. This chain is Retron Ec83 probable ATPase, found in Escherichia coli.